Consider the following 629-residue polypeptide: 1-deoxy-D-xylulose-5-phosphate synthase (629 aa).

Residues H72 and 113–115 contribute to the thiamine diphosphate site; that span reads GHA. Position 144 (D144) interacts with Mg(2+). Thiamine diphosphate is bound by residues 145-146, N174, Y287, and E370; that span reads GA. Residue N174 coordinates Mg(2+).

The protein belongs to the transketolase family. DXPS subfamily. Homodimer. Mg(2+) is required as a cofactor. The cofactor is thiamine diphosphate.

The enzyme catalyses D-glyceraldehyde 3-phosphate + pyruvate + H(+) = 1-deoxy-D-xylulose 5-phosphate + CO2. Its pathway is metabolic intermediate biosynthesis; 1-deoxy-D-xylulose 5-phosphate biosynthesis; 1-deoxy-D-xylulose 5-phosphate from D-glyceraldehyde 3-phosphate and pyruvate: step 1/1. Its function is as follows. Catalyzes the acyloin condensation reaction between C atoms 2 and 3 of pyruvate and glyceraldehyde 3-phosphate to yield 1-deoxy-D-xylulose-5-phosphate (DXP). The protein is 1-deoxy-D-xylulose-5-phosphate synthase of Prochlorococcus marinus (strain MIT 9215).